The chain runs to 277 residues: Glucose-6-phosphatase catalytic subunit 1 (277 aa).

Arginine 4 serves as a coordination point for substrate. Helical transmembrane passes span 39-59 and 67-87; these read GHAMGAAGVWYVMVTALLSIA and LLYRFLYIGLWMLMGLVELVV. The Proton donor role is filled by histidine 40. A substrate-binding site is contributed by arginine 91. Histidine 97 acts as the Nucleophile in catalysis. The next 3 membrane-spanning stretches (helical) occupy residues 131–151, 215–235, and 250–270; these read FLITLFLTSFAVGFYVLLKAL, IGCIVISVSLLHLLDGWTFSP, and AVALLIPTTLVPWALSKIYPV. Residues 274-277 carry the Prevents secretion from ER motif; the sequence is GKNL.

This sequence belongs to the glucose-6-phosphatase family.

The protein resides in the endoplasmic reticulum membrane. The catalysed reaction is D-glucose 6-phosphate + H2O = D-glucose + phosphate. Its pathway is carbohydrate biosynthesis; gluconeogenesis. Functionally, hydrolyzes glucose-6-phosphate to glucose in the endoplasmic reticulum. Forms with the glucose-6-phosphate transporter (SLC37A4/G6PT) the complex responsible for glucose production in the terminal step of glycogenolysis and gluconeogenesis. Hence, it is the key enzyme in homeostatic regulation of blood glucose levels. The polypeptide is Glucose-6-phosphatase catalytic subunit 1 (g6pc1) (Haplochromis xenognathus (Lake Victoria cichlid)).